The following is a 218-amino-acid chain: Glutathione S-transferase Mu 1 (218 aa).

Residues 2–88 form the GST N-terminal domain; the sequence is PMILGYWDIR…YIARKHNLCG (87 aa). 7-8 contacts glutathione; the sequence is YW. Residue T34 is modified to Phosphothreonine. Glutathione-binding positions include 43 to 46, K50, 59 to 60, and 72 to 73; these read RSQW, NL, and QS. Positions 90–208 constitute a GST C-terminal domain; it reads TEEEKIRVDI…KSSRFLPRPV (119 aa). Y116 lines the substrate pocket. S210 bears the Phosphoserine mark.

This sequence belongs to the GST superfamily. Mu family. In terms of assembly, homodimer. In terms of tissue distribution, liver (at protein level).

The protein resides in the cytoplasm. The catalysed reaction is RX + glutathione = an S-substituted glutathione + a halide anion + H(+). The enzyme catalyses prostaglandin A2 + glutathione = prostaglandin A2-S-(R)-glutathione. It carries out the reaction prostaglandin J2 + glutathione = prostaglandin J2-S-(R)-glutathione. It catalyses the reaction prostaglandin J2 + glutathione = prostaglandin J2-S-(S)-glutathione. The catalysed reaction is prostaglandin A2 + glutathione = prostaglandin A2-S-(S)-glutathione. The enzyme catalyses 11(S)-hydroxy-14(S),15(S)-epoxy-(5Z,8Z,12E)-eicosatrienoate + glutathione = (11S,15S)-dihydroxy-14(R)-S-glutathionyl-(5Z,8Z,12E)-eicosatrienoate. Conjugation of reduced glutathione to a wide number of exogenous and endogenous hydrophobic electrophiles. Involved in the formation of glutathione conjugates of both prostaglandin A2 (PGA2) and prostaglandin J2 (PGJ2). Participates in the formation of novel hepoxilin regioisomers. The chain is Glutathione S-transferase Mu 1 from Homo sapiens (Human).